Reading from the N-terminus, the 204-residue chain is MAEDADMRNELSDMQQRADQLADESLESTRRMLQLVEESKDAGIRTLVMLDEQGEQLERIEEGMDQINKDMKDAEKNLNDLGKFCGLCSCPCNKMKSGGSKAWGNNQDGVVASQPARVVDEREQMAISGGFIRRVTDDARENEMDENLEQVGGIIGNLRHMALDMGNEIDTQNRQIDRIMEKADSNKTRIDEANQRATKMLGSG.

The span at 1-11 shows a compositional bias: basic and acidic residues; sequence MAEDADMRNEL. The disordered stretch occupies residues 1–25; the sequence is MAEDADMRNELSDMQQRADQLADES. 2 t-SNARE coiled-coil homology domains span residues 19-81 and 138-200; these read DQLA…LNDL and DARE…ATKM.

It belongs to the SNAP-25 family.

Its subcellular location is the synapse. It is found in the synaptosome. The protein localises to the cell membrane. Functionally, may play an important role in the synaptic function of specific neuronal systems. Associates with proteins involved in vesicle docking and membrane fusion. The sequence is that of Synaptosomal-associated protein 25-A (snap25a) from Carassius auratus (Goldfish).